The following is a 160-amino-acid chain: Myosin catalytic light chain LC-1, mantle muscle (160 aa).

Blocked amino end (Xaa) is present on residue 1. 3 EF-hand domains span residues 7-44 (DEIE…LGMN), 83-118 (TAAD…LGER), and 119-153 (ITED…VMAG).

In terms of biological role, in molluscan muscle, calcium regulation is associated with myosin rather than with actin. Muscle myosin contains two types of light chains: the catalytic light chain, essential for ATPase activity, and the regulatory light chain, a calcium-binding protein responsible for Ca(2+) dependent binding and Ca(2+) dependent Mg-ATPase activity. This chain is Myosin catalytic light chain LC-1, mantle muscle, found in Todarodes pacificus (Japanese flying squid).